A 78-amino-acid chain; its full sequence is Protein Class8-like (78 aa).

A signal peptide spans 1–19; the sequence is MRTLVVLLIGAVLLCSANA. Positions 20 to 36 are excised as a propeptide; sequence FLDELLAESVNDMTDKR. The ShKT domain occupies 38–78; it reads CFDKYKSNICGGVISPAHCVRRSGRMAKFAKENCAHFCGFC. 3 disulfides stabilise this stretch: Cys-38/Cys-78, Cys-47/Cys-71, and Cys-56/Cys-75.

Expressed in ganglion neurons residing in the mesoglea (observed in both planulae and primary polyps). Not expressed in nematocytes.

Functionally, probable neuropeptide. The chain is Protein Class8-like from Nematostella vectensis (Starlet sea anemone).